A 577-amino-acid polypeptide reads, in one-letter code: Isocitrate dehydrogenase kinase/phosphatase (577 aa).

Residues 318–324 (APGVRGM) and K339 each bind ATP. The active site involves D374.

This sequence belongs to the AceK family.

It localises to the cytoplasm. The catalysed reaction is L-seryl-[isocitrate dehydrogenase] + ATP = O-phospho-L-seryl-[isocitrate dehydrogenase] + ADP + H(+). Its function is as follows. Bifunctional enzyme which can phosphorylate or dephosphorylate isocitrate dehydrogenase (IDH) on a specific serine residue. This is a regulatory mechanism which enables bacteria to bypass the Krebs cycle via the glyoxylate shunt in response to the source of carbon. When bacteria are grown on glucose, IDH is fully active and unphosphorylated, but when grown on acetate or ethanol, the activity of IDH declines drastically concomitant with its phosphorylation. The protein is Isocitrate dehydrogenase kinase/phosphatase of Pseudomonas aeruginosa (strain ATCC 15692 / DSM 22644 / CIP 104116 / JCM 14847 / LMG 12228 / 1C / PRS 101 / PAO1).